The sequence spans 242 residues: uncharacterized protein (242 aa).

A Response regulatory domain is found at 3 to 116; that stretch reads TALVIDDEPF…RLRKTVKRLS (114 aa). Asp-54 is modified (4-aspartylphosphate). One can recognise an HTH LytTR-type domain in the interval 139–240; the sequence is IPCIGHNRIV…LKLLKEMLGL (102 aa).

This is an uncharacterized protein from Vibrio vulnificus (strain CMCP6).